The primary structure comprises 460 residues: Chromosomal replication initiator protein DnaA (460 aa).

Residues 1–84 (MAVSLWQQCI…RFDIGSRPSA (84 aa)) are domain I, interacts with DnaA modulators. The tract at residues 84-123 (AKKPEPAPVAAVRVPNPQTKASVGTSFNTTEPVANANHRS) is domain II. A domain III, AAA+ region region spans residues 124–340 (NINPTYQFDN…GALNRVIANA (217 aa)). Positions 168, 170, 171, and 172 each coordinate ATP. Residues 341–460 (NFTGRPITID…YANLIRTLSS (120 aa)) are domain IV, binds dsDNA.

This sequence belongs to the DnaA family. In terms of assembly, oligomerizes as a right-handed, spiral filament on DNA at oriC.

It is found in the cytoplasm. Functionally, plays an essential role in the initiation and regulation of chromosomal replication. ATP-DnaA binds to the origin of replication (oriC) to initiate formation of the DNA replication initiation complex once per cell cycle. Binds the DnaA box (a 9 base pair repeat at the origin) and separates the double-stranded (ds)DNA. Forms a right-handed helical filament on oriC DNA; dsDNA binds to the exterior of the filament while single-stranded (ss)DNA is stabiized in the filament's interior. The ATP-DnaA-oriC complex binds and stabilizes one strand of the AT-rich DNA unwinding element (DUE), permitting loading of DNA polymerase. After initiation quickly degrades to an ADP-DnaA complex that is not apt for DNA replication. Binds acidic phospholipids. This Shewanella sp. (strain ANA-3) protein is Chromosomal replication initiator protein DnaA.